The sequence spans 186 residues: UPF0398 protein BPUM_1952 (186 aa).

This sequence belongs to the UPF0398 family.

The chain is UPF0398 protein BPUM_1952 from Bacillus pumilus (strain SAFR-032).